The following is a 139-amino-acid chain: D-ribose pyranase (139 aa).

His20 (proton donor) is an active-site residue. Substrate-binding positions include Asp28, His106, and 128–130 (YAN).

Belongs to the RbsD / FucU family. RbsD subfamily. Homodecamer.

The protein localises to the cytoplasm. The enzyme catalyses beta-D-ribopyranose = beta-D-ribofuranose. Its pathway is carbohydrate metabolism; D-ribose degradation; D-ribose 5-phosphate from beta-D-ribopyranose: step 1/2. Catalyzes the interconversion of beta-pyran and beta-furan forms of D-ribose. In Salmonella arizonae (strain ATCC BAA-731 / CDC346-86 / RSK2980), this protein is D-ribose pyranase.